The sequence spans 591 residues: Protein enabled homolog (591 aa).

Residues 1 to 111 (MSEQSICQAR…SAMMHALEVL (111 aa)) form the WH1 domain. A compositionally biased stretch (polar residues) spans 115–136 (ETGPTLPRQNSQLPAQVQNGPS). Positions 115–146 (ETGPTLPRQNSQLPAQVQNGPSQEELEIQRRQ) are disordered. Ser125 carries the post-translational modification Phosphoserine. A coiled-coil region spans residues 135–265 (PSQEELEIQR…LEWERERRIS (131 aa)). Tandem repeats lie at residues 156–160 (LERER), 161–165 (LERER), 166–170 (MERER), 171–175 (LERER), 176–180 (LERER), 181–185 (LERER), 186–190 (LEQEQ), 191–195 (LERER), and 196–200 (QERER). The segment at 156 to 200 (LERERLERERMERERLERERLERERLERERLEQEQLERERQERER) is 9 X 5 AA tandem repeats of [LMQ]-E-[QR]-E-[QR]. Over residues 221–264 (RLDRERQERQERERLERLERERQERERQEQLEREQLEWERERRI) the composition is skewed to basic and acidic residues. Positions 221–379 (RLDRERQERQ…PPLPASGFFL (159 aa)) are disordered. Ser265 carries the post-translational modification Phosphoserine; by PKA. Polar residues predominate over residues 275–305 (TPLNSVLGDSSASEPGLQAASQPAETPSQQG). Pro residues-rich tracts occupy residues 311–323 (LAPP…PPGP) and 330–373 (LPPP…PPLP). Residues 391-411 (GLAAAIAGAKLRKVSRMEDTS) are EVH2 block A. Positions 391-588 (GLAAAIAGAK…DAIRQELSKS (198 aa)) are EVH2. Residues 400-403 (KLRK) carry the KLKR motif. Residues 405–549 (SRMEDTSFPS…LSQPSANGVQ (145 aa)) are disordered. Positions 432–443 (RGNGPLPLGGSG) are enriched in gly residues. Residues 442-459 (SGLMEEMSALLARRRRIA) form an EVH2 block B region. Ile465 carries the post-translational modification Phosphothreonine. Phosphoserine is present on residues Glu471 and Glu475. Composition is skewed to polar residues over residues 479–491 (PVTS…STPE) and 499–509 (RTNTMNGSKSP). Residue Thr502 is modified to Phosphothreonine. Residues Ser506, Ser508, and Ser512 each carry the phosphoserine modification. The segment covering 538–549 (TPLSQPSANGVQ) has biased composition (polar residues). An EVH2 block C region spans residues 554-588 (DYDRLKQDILDEMRKELTKLKEELIDAIRQELSKS). The stretch at 557–587 (RLKQDILDEMRKELTKLKEELIDAIRQELSK) forms a coiled coil.

The protein belongs to the Ena/VASP family. Homotetramer. Interacts with APBB1IP, APBB1, PFN1 and ROBO4. Isoforms, containing the polyproline-rich regions with PPLP motifs, bind the WW domain of APBB1IP. Isoforms, containing the PPSY motif, bind, in vitro, to the WW2 and WW3 domains of NEDD4 and to the WW1 domain of YAP1. Binds the SH3 domain of BAIAP2-alpha but only after the autoinhibitory region of BAIAP2-alpha has been blocked by interaction with CDC42. Interacts, via the EVH1/WH1 domain, with the Pro-rich domains from VCL, ZYX and Listeria monocytogenes actA and with TES (via LIM domains). The TES LIM domain and the Pro-rich domains from VCL or ZYX compete for the same binding site. Interaction with ZYX is important for targeting ENAH to focal adhesions and enhances production of actin-rich structures at the apical surface of cells. Interacts, through the Pro-rich region, with the C-terminal SH3 domain of DNMPB. Binds GPHN. Interacts with FAT1 (via EVH1 domains). Heterotrimer with TES and ACTL7A. Interacts with PRPF40A. In terms of processing, NTN1-induced PKA phosphorylation on Ser-265 directly parallels the formation of filopodial protrusions. As to expression, expressed in myoepithelia of parotid, breast, bronchial glands and sweat glands. Expressed in colon-rectum muscolaris mucosae epithelium, pancreas acinar ductal epithelium, endometrium epithelium, prostate fibromuscolar stroma and placenta vascular media. Overexpressed in a majority of breast cancer cell lines and primary breast tumor lesions.

It is found in the cytoplasm. Its subcellular location is the cytoskeleton. The protein resides in the cell projection. It localises to the lamellipodium. The protein localises to the filopodium. It is found in the synapse. Its subcellular location is the cell junction. The protein resides in the focal adhesion. In terms of biological role, ena/VASP proteins are actin-associated proteins involved in a range of processes dependent on cytoskeleton remodeling and cell polarity such as axon guidance and lamellipodial and filopodial dynamics in migrating cells. ENAH induces the formation of F-actin rich outgrowths in fibroblasts. Acts synergistically with BAIAP2-alpha and downstream of NTN1 to promote filipodia formation. The chain is Protein enabled homolog (ENAH) from Homo sapiens (Human).